A 156-amino-acid polypeptide reads, in one-letter code: ATP synthase subunit b (156 aa).

The chain crosses the membrane as a helical span at residues 3-23; the sequence is ITLTIFAQALAFAGLIWIVAT.

This sequence belongs to the ATPase B chain family. As to quaternary structure, F-type ATPases have 2 components, F(1) - the catalytic core - and F(0) - the membrane proton channel. F(1) has five subunits: alpha(3), beta(3), gamma(1), delta(1), epsilon(1). F(0) has three main subunits: a(1), b(2) and c(10-14). The alpha and beta chains form an alternating ring which encloses part of the gamma chain. F(1) is attached to F(0) by a central stalk formed by the gamma and epsilon chains, while a peripheral stalk is formed by the delta and b chains.

It is found in the cell inner membrane. Functionally, f(1)F(0) ATP synthase produces ATP from ADP in the presence of a proton or sodium gradient. F-type ATPases consist of two structural domains, F(1) containing the extramembraneous catalytic core and F(0) containing the membrane proton channel, linked together by a central stalk and a peripheral stalk. During catalysis, ATP synthesis in the catalytic domain of F(1) is coupled via a rotary mechanism of the central stalk subunits to proton translocation. In terms of biological role, component of the F(0) channel, it forms part of the peripheral stalk, linking F(1) to F(0). In Xanthomonas campestris pv. campestris (strain 8004), this protein is ATP synthase subunit b.